Reading from the N-terminus, the 280-residue chain is Exfoliative toxin A (280 aa).

Positions 1–38 (MNNSKIISKVLLSLSLFTVGASAFVIQDELMQKNHAKA) are cleaved as a signal peptide. Residues histidine 110, aspartate 158, and serine 233 each act as charge relay system in the active site.

It belongs to the peptidase S1B family. Requires Ca(2+) as cofactor.

Has serine protease-like properties and binds to the skin protein profilaggrin. Cleaves substrates after acidic residues. Exfoliative toxins cause impetigous diseases commonly referred as staphylococcal scalded skin syndrome (SSSS). This Staphylococcus aureus protein is Exfoliative toxin A (eta).